Here is a 101-residue protein sequence, read N- to C-terminus: Large ribosomal subunit protein uL23 (101 aa).

It belongs to the universal ribosomal protein uL23 family. In terms of assembly, part of the 50S ribosomal subunit. Contacts protein L29, and trigger factor when it is bound to the ribosome.

One of the early assembly proteins it binds 23S rRNA. One of the proteins that surrounds the polypeptide exit tunnel on the outside of the ribosome. Forms the main docking site for trigger factor binding to the ribosome. The chain is Large ribosomal subunit protein uL23 from Azoarcus sp. (strain BH72).